Reading from the N-terminus, the 316-residue chain is MVLQELRDSNSSKFQVSEFILMGFPGIHSWQHWLSLPLALLYLLALSANILILIIINKEAALHQPMYYFLGILAMADIGLATTIMPKILAILWFNAKTISLLECFAQMYAIHCFVAMESSTFVCMAIDRYVAICRPLRYPSIITESFVFKANGFMALRNSLCLISVPLLAAQRHYCSQNQIEHCLCSNLGVTSLSCDDRRINSINQVLLAWTLMGSDLGLIILSYALILYSVLKLNSPEAASKALSTCTSHLILILFFYTVIIVISITRSTGMRVPLIPVLLNVLHNVIPPALNPMVYALKNKELRQGLYKVLRLE.

The Extracellular segment spans residues 1-32; that stretch reads MVLQELRDSNSSKFQVSEFILMGFPGIHSWQH. Asn-10 carries an N-linked (GlcNAc...) asparagine glycan. A helical transmembrane segment spans residues 33–53; sequence WLSLPLALLYLLALSANILIL. Residues 54–61 lie on the Cytoplasmic side of the membrane; sequence IIINKEAA. The chain crosses the membrane as a helical span at residues 62–82; that stretch reads LHQPMYYFLGILAMADIGLAT. Topologically, residues 83 to 106 are extracellular; sequence TIMPKILAILWFNAKTISLLECFA. Cysteines 104 and 196 form a disulfide. A helical transmembrane segment spans residues 107 to 127; that stretch reads QMYAIHCFVAMESSTFVCMAI. The Cytoplasmic portion of the chain corresponds to 128–146; sequence DRYVAICRPLRYPSIITES. The helical transmembrane segment at 147–167 threads the bilayer; the sequence is FVFKANGFMALRNSLCLISVP. The Extracellular segment spans residues 168-203; the sequence is LLAAQRHYCSQNQIEHCLCSNLGVTSLSCDDRRINS. A helical transmembrane segment spans residues 204-224; the sequence is INQVLLAWTLMGSDLGLIILS. Topologically, residues 225-244 are cytoplasmic; sequence YALILYSVLKLNSPEAASKA. A helical transmembrane segment spans residues 245–265; that stretch reads LSTCTSHLILILFFYTVIIVI. Topologically, residues 266–279 are extracellular; that stretch reads SITRSTGMRVPLIP. Residues 280–300 form a helical membrane-spanning segment; that stretch reads VLLNVLHNVIPPALNPMVYAL. The Cytoplasmic segment spans residues 301–316; the sequence is KNKELRQGLYKVLRLE.

The protein belongs to the G-protein coupled receptor 1 family.

The protein resides in the cell membrane. In terms of biological role, odorant receptor. This is Olfactory receptor 56B2 from Homo sapiens (Human).